A 222-amino-acid chain; its full sequence is Probable elongation factor 1-beta (222 aa).

A disordered region spans residues 90-111 (KPAADDDDDVDLFGSDDEEDEE). The segment covering 94 to 111 (DDDDDVDLFGSDDEEDEE) has biased composition (acidic residues). The residue at position 104 (serine 104) is a Phosphoserine.

This sequence belongs to the EF-1-beta/EF-1-delta family. EF-1 is composed of 4 subunits: alpha, beta, beta' and gamma. Phosphorylation affects the GDP/GTP exchange rate.

In terms of biological role, EF-1-beta and EF-1-delta stimulate the exchange of GDP bound to EF-1-alpha to GTP. The chain is Probable elongation factor 1-beta from Drosophila melanogaster (Fruit fly).